Reading from the N-terminus, the 223-residue chain is PKHD-type hydroxylase CPS_3426 (223 aa).

The Fe2OG dioxygenase domain maps to 77–175; sequence KSMMPFIISE…RKVALTWIES (99 aa). 3 residues coordinate Fe cation: H96, D98, and H156. R166 serves as a coordination point for 2-oxoglutarate.

The cofactor is Fe(2+). It depends on L-ascorbate as a cofactor.

This is PKHD-type hydroxylase CPS_3426 from Colwellia psychrerythraea (strain 34H / ATCC BAA-681) (Vibrio psychroerythus).